Reading from the N-terminus, the 356-residue chain is Guanine nucleotide-binding protein alpha-17 subunit (356 aa).

Glycine 2 carries the N-myristoyl glycine lipid modification. The S-palmitoyl cysteine moiety is linked to residue cysteine 4. Positions 32 to 356 constitute a G-alpha domain; sequence SIVKLLLLGA…QKNLQKAGMM (325 aa). The segment at 35–48 is G1 motif; sequence KLLLLGAGECGKST. GTP-binding positions include 40–47, 177–183, 202–206, 271–274, and alanine 328; these read GAGECGKS, LYSRVAT, DVGGQ, and NKKD. The Mg(2+) site is built by serine 47 and threonine 183. The G2 motif stretch occupies residues 175-183; it reads DILYSRVAT. The tract at residues 198–207 is G3 motif; the sequence is FRVFDVGGQR. A G4 motif region spans residues 267–274; that stretch reads ILFMNKKD. Residues 326–331 form a G5 motif region; that stretch reads TCATDT.

This sequence belongs to the G-alpha family. In terms of assembly, g proteins are composed of 3 units; alpha, beta and gamma. The alpha chain contains the guanine nucleotide binding site.

It is found in the cell projection. The protein resides in the cilium. Its subcellular location is the dendrite. Its function is as follows. Guanine nucleotide-binding proteins (G proteins) are involved as modulators or transducers in various transmembrane signaling systems. This specific G-alpha subunit plays an important role in olfaction and in cilia morphogenesis. Involved in chemotactic responses to attractants diacetyl, pyrazine, 2,4,5-trimethylthiazole, benzaldehyde, isoamyl alcohol, butanone and 2,3-pentanedione. Displays a redundant function with gpa-3 in chemotactic responses. Involved in avoidance responses to copper, sodium dodecyl sulfate and linoleic acid. Involved in osmotic avoidance and mechanosensory responses. Involved in specifying fan-like morphology of cilia of head sensory neurons AWC. This is Guanine nucleotide-binding protein alpha-17 subunit (odr-3) from Caenorhabditis briggsae.